Here is a 130-residue protein sequence, read N- to C-terminus: MKDWLDEIKWNSDGLVPAIAQDHKTGRVLMMAWMNRESLALTATEQRAIYWSRSRGKLWRKGEESGHVQKLHELRLDCDADVIILMVEQLGHIACHTGRESCFYRVYEDGQWKIVDPVLKDPDAIYSAGH.

Residue D77 participates in Mg(2+) binding. C78 lines the Zn(2+) pocket. Mg(2+)-binding residues include D79 and D81. Residues C95 and C102 each contribute to the Zn(2+) site.

This sequence belongs to the PRA-CH family. In terms of assembly, homodimer. Mg(2+) is required as a cofactor. Zn(2+) serves as cofactor.

The protein localises to the cytoplasm. The enzyme catalyses 1-(5-phospho-beta-D-ribosyl)-5'-AMP + H2O = 1-(5-phospho-beta-D-ribosyl)-5-[(5-phospho-beta-D-ribosylamino)methylideneamino]imidazole-4-carboxamide. It functions in the pathway amino-acid biosynthesis; L-histidine biosynthesis; L-histidine from 5-phospho-alpha-D-ribose 1-diphosphate: step 3/9. Its function is as follows. Catalyzes the hydrolysis of the adenine ring of phosphoribosyl-AMP. The protein is Phosphoribosyl-AMP cyclohydrolase of Pseudomonas putida (strain GB-1).